We begin with the raw amino-acid sequence, 362 residues long: HLA class I histocompatibility antigen, B alpha chain (362 aa).

Residues 1-24 form the signal peptide; the sequence is MLVMAPRTVLLLLSAALALTETWA. Residues 3–11 form a VL9 epitope region; that stretch reads VMAPRTVLL. The segment at 25–114 is alpha-1; that stretch reads GSHSMRYFYT…LRGYYNQSEA (90 aa). Residues 25-309 are Extracellular-facing; it reads GSHSMRYFYT…PSSQSTVPIV (285 aa). Asparagine 87 is a binding site for a peptide antigen. Residues 101-107 carry the Bw6 motif motif; sequence SLRNLRG. A peptide antigen is bound at residue tyrosine 108. N-linked (GlcNAc...) asparagine glycosylation occurs at asparagine 110. The tract at residues 115 to 206 is alpha-2; it reads GSHTLQSMYG…ENGKDKLERA (92 aa). Cysteine 125 and cysteine 188 are oxidised to a cystine. 5 residues coordinate a peptide antigen: threonine 167, lysine 170, glutamate 176, tyrosine 183, and tyrosine 195. Residues 207-298 form an alpha-3 region; that stretch reads DPPKTHVTHH…GLPKPLTLRW (92 aa). Residues 209-295 form the Ig-like C1-type domain; sequence PKTHVTHHPI…QHEGLPKPLT (87 aa). Cysteine 227 and cysteine 283 form a disulfide bridge. The connecting peptide stretch occupies residues 299–309; it reads EPSSQSTVPIV. The helical transmembrane segment at 310 to 333 threads the bilayer; it reads GIVAGLAVLAVVVIGAVVAAVMCR. The Cytoplasmic segment spans residues 334–362; sequence RKSSGGKGGSYSQAACSDSAQGSDVSLTA. Residues 337–362 form a disordered region; it reads SGGKGGSYSQAACSDSAQGSDVSLTA. Residues 346 to 362 are compositionally biased toward polar residues; that stretch reads QAACSDSAQGSDVSLTA.

In terms of assembly, heterotrimer that consists of an alpha chain HLA-B, a beta chain B2M and a peptide (peptide-HLA-B-B2M). Early in biogenesis, HLA-B-B2M dimer interacts with the components of the peptide-loading complex composed of TAPBP, TAP1-TAP2, TAPBPL, PDIA3/ERP57 and CALR. Interacts with TAP1-TAP2 transporter via TAPBP; this interaction is obligatory for the loading of peptide epitopes delivered to the ER by TAP1-TAP2 transporter. Interacts with TAPBPL; TAPBPL binds peptide-free HLA-B-B2M complexes or those loaded with low affinity peptides, likely facilitating peptide exchange for higher affinity peptides. Only optimally assembled peptide-HLA-B-B2M trimer translocates to the surface of antigen-presenting cells, where it interacts with TCR and CD8 coreceptor on the surface of T cells. HLA-B (via polymorphic alpha-1 and alpha-2 domains) interacts with antigen-specific TCR (via CDR1, CDR2 and CDR3 domains). One HLA-B molecule (mainly via nonpolymorphic alpha-3 domain) interacts with one CD8A homodimer (via CDR-like loop); this interaction ensures peptide-HLA-B-B2M recognition by CD8-positive T cells only. Allele B*57:01 interacts (via Bw4 motif) with KIR3DL1 (via Ig-like C2-type domain); this interaction may interfere with peptide binding. Allele B*46:01 interacts with KIR2DL3. (Microbial infection) Interacts with HTLV-1 accessory protein p12I.

The protein resides in the cell membrane. It localises to the endoplasmic reticulum membrane. Antigen-presenting major histocompatibility complex class I (MHCI) molecule. In complex with B2M/beta 2 microglobulin displays primarily viral and tumor-derived peptides on antigen-presenting cells for recognition by alpha-beta T cell receptor (TCR) on HLA-B-restricted CD8-positive T cells, guiding antigen-specific T cell immune response to eliminate infected or transformed cells. May also present self-peptides derived from the signal sequence of secreted or membrane proteins, although T cells specific for these peptides are usually inactivated to prevent autoreactivity. Both the peptide and the MHC molecule are recognized by TCR, the peptide is responsible for the fine specificity of antigen recognition and MHC residues account for the MHC restriction of T cells. Typically presents intracellular peptide antigens of 8 to 13 amino acids that arise from cytosolic proteolysis via constitutive proteasome and IFNG-induced immunoproteasome. Can bind different peptides containing allele-specific binding motifs, which are mainly defined by anchor residues at position 2 and 9. Functionally, allele B*07:02: Displays peptides sharing a common signature motif, namely a Pro residue at position 2 and mainly a Leu anchor residue at the C-terminus. Presents a long peptide (APRGPHGGAASGL) derived from the cancer-testis antigen CTAG1A/NY-ESO-1, eliciting a polyclonal CD8-positive T cell response against tumor cells. Presents viral epitopes derived from HIV-1 gag-pol (TPQDLNTML) and Nef (RPQVPLRPM). Presents an immunodominant epitope derived from SARS-CoV-2 N/nucleoprotein (SPRWYFYYL). Displays self-peptides including a peptide derived from the signal sequence of HLA-DPB1 (APRTVALTA). In terms of biological role, allele B*08:01: Presents to CD8-positive T cells viral epitopes derived from EBV/HHV-4 EBNA3 (QAKWRLQTL), eliciting cytotoxic T cell response. Its function is as follows. Allele B*13:02: Presents multiple HIV-1 epitopes derived from gag (RQANFLGKI, GQMREPRGSDI), nef (RQDILDLWI), gag-pol (RQYDQILIE, GQGQWTYQI) and rev (LQLPPLERL), all having in common a Gln residue at position 2 and mainly hydrophobic amino acids Leu, Ile or Val at the C-terminus. Associated with successful control of HIV-1 infection. Allele B*18:01: Preferentially presents octomeric and nonameric peptides sharing a common motif, namely a Glu at position 2 and Phe or Tyr anchor residues at the C-terminus. Presents an EBV/HHV-4 epitope derived from BZLF1 (SELEIKRY). May present to CD8-positive T cells an antigenic peptide derived from MAGEA3 (MEVDPIGHLY), triggering an anti-tumor immune response. May display a broad repertoire of self-peptides with a preference for peptides derived from RNA-binding proteins. Functionally, allele B*27:05: Presents to CD8-positive T cells immunodominant viral epitopes derived from HCV POLG (ARMILMTHF), HIV-1 gag (KRWIILGLNK), IAV NP (SRYWAIRTR), SARS-CoV-2 N/nucleoprotein (QRNAPRITF), EBV/HHV-4 EBNA4 (HRCQAIRKK) and EBV/HHV-4 EBNA6 (RRIYDLIEL), conferring longterm protection against viral infection. Can present self-peptides derived from cytosolic and nuclear proteins. All peptides carry an Arg at position 2. The peptide-bound form interacts with NK cell inhibitory receptor KIR3DL1 and inhibits NK cell activation in a peptide-specific way, being particularly sensitive to the nature of the amino acid side chain at position 8 of the antigenic peptide. KIR3DL1 fails to recognize HLA-B*27:05 in complex with B2M and EBV/HHV-4 EBNA6 (RRIYDLIEL) peptide, which can lead to increased activation of NK cells during infection. May present an altered repertoire of peptides in the absence of TAP1-TAP2 and TAPBPL. In terms of biological role, allele B*40:01: Presents immunodominant viral epitopes derived from EBV/HHV-4 LMP2 (IEDPPFNSL) and SARS-CoV-2 N/nucleoprotein (MEVTPSGTWL), triggering memory CD8-positive T cell response. Displays self-peptides sharing a signature motif, namely a Glu at position 2 and a Leu anchor residue at the C-terminus. Its function is as follows. Allele B*41:01: Displays self-peptides sharing a signature motif, namely a Glu at position 2 and Ala or Pro anchor residues at the C-terminus. Allele B*44:02: Presents immunodominant viral epitopes derived from EBV/HHV-4 EBNA4 (VEITPYKPTW) and EBNA6 (AEGGVGWRHW, EENLLDFVRF), triggering memory CD8-positive T cell response. Displays self-peptides sharing a signature motif, namely a Glu at position 2 and Phe, Tyr or Trp anchor residues at the C-terminus. Functionally, allele B*45:01: Displays self-peptides sharing a signature motif, namely a Glu at position 2 and Ala or Pro anchor residues at the C-terminus. In terms of biological role, allele B*46:01: Preferentially presents nonameric peptides sharing a signature motif, namely Ala and Leu at position 2 and Tyr, Phe, Leu, or Met anchor residues at the C-terminus. The peptide-bound form interacts with KIR2DL3 and inhibits NK cell cytotoxic response in a peptide-specific way. Its function is as follows. Allele B*47:01: Displays self-peptides sharing a signature motif, namely an Asp at position 2 and Leu or Met anchor residues at the C-terminus. Allele B*49:01: Displays self-peptides sharing a signature motif, namely a Glu at position 2 and Ile or Val anchor residues at the C-terminus. Functionally, allele B*50:01: Displays self-peptides sharing a signature motif, namely a Glu at position 2 and Ala or Pro anchor residues at the C-terminus. In terms of biological role, allele B*51:01: Presents an octomeric HIV-1 epitope derived from gag-pol (TAFTIPSI) to the public TRAV17/TRBV7-3 TCR clonotype, strongly suppressing HIV-1 replication. Its function is as follows. Allele B*54:01: Displays peptides sharing a common signature motif, namely a Pro residue at position 2 and Ala anchor residue at the C-terminus. Allele B*55:01: Displays peptides sharing a common signature motif, namely a Pro residue at position 2 and Ala anchor residue at the C-terminus. Functionally, allele B*56:01: Displays peptides sharing a common signature motif, namely a Pro residue at position 2 and Ala anchor residue at the C-terminus. In terms of biological role, allele B*57:01: The peptide-bound form recognizes KIR3DL1 and inhibits NK cell cytotoxic response. Presents HIV gag peptides (immunodominant KAFSPEVIPMF and subdominant KALGPAATL epitopes) predominantly to CD8-positive T cell clones expressing a TRAV41-containing TCR, triggering HLA-B-restricted T cell responses. Its function is as follows. Allele B*67:01: Displays peptides sharing a common signature motif, namely a Pro residue at position 2 and Leu anchor residue at the C-terminus. In Homo sapiens (Human), this protein is HLA class I histocompatibility antigen, B alpha chain.